We begin with the raw amino-acid sequence, 377 residues long: Succinyl-diaminopimelate desuccinylase (377 aa).

A Zn(2+)-binding site is contributed by His66. Asp68 is a catalytic residue. Zn(2+) is bound at residue Asp99. The active-site Proton acceptor is Glu133. Zn(2+)-binding residues include Glu134, Glu162, and His348.

It belongs to the peptidase M20A family. DapE subfamily. As to quaternary structure, homodimer. The cofactor is Zn(2+). Co(2+) is required as a cofactor.

The catalysed reaction is N-succinyl-(2S,6S)-2,6-diaminopimelate + H2O = (2S,6S)-2,6-diaminopimelate + succinate. The protein operates within amino-acid biosynthesis; L-lysine biosynthesis via DAP pathway; LL-2,6-diaminopimelate from (S)-tetrahydrodipicolinate (succinylase route): step 3/3. In terms of biological role, catalyzes the hydrolysis of N-succinyl-L,L-diaminopimelic acid (SDAP), forming succinate and LL-2,6-diaminopimelate (DAP), an intermediate involved in the bacterial biosynthesis of lysine and meso-diaminopimelic acid, an essential component of bacterial cell walls. In Chromobacterium violaceum (strain ATCC 12472 / DSM 30191 / JCM 1249 / CCUG 213 / NBRC 12614 / NCIMB 9131 / NCTC 9757 / MK), this protein is Succinyl-diaminopimelate desuccinylase.